We begin with the raw amino-acid sequence, 397 residues long: Oxysterol-binding protein homolog C354.07c (397 aa).

N-linked (GlcNAc...) asparagine glycans are attached at residues Asn186 and Asn195.

It belongs to the OSBP family.

The protein resides in the endoplasmic reticulum. The polypeptide is Oxysterol-binding protein homolog C354.07c (Schizosaccharomyces pombe (strain 972 / ATCC 24843) (Fission yeast)).